A 201-amino-acid polypeptide reads, in one-letter code: UPF0301 protein Bpet0561 (201 aa).

It belongs to the UPF0301 (AlgH) family.

This is UPF0301 protein Bpet0561 from Bordetella petrii (strain ATCC BAA-461 / DSM 12804 / CCUG 43448).